The following is a 481-amino-acid chain: Trichosetin biosynthesis cluster MFS transporter (481 aa).

The segment covering 1–13 (MSTTPQMSQSGFQ) has biased composition (polar residues). Residues 1 to 63 (MSTTPQMSQS…DGPDDPQHPL (63 aa)) are disordered. Residues 20 to 31 (GAREDVGTEAQE) are compositionally biased toward basic and acidic residues. Asn64 carries an N-linked (GlcNAc...) asparagine glycan. A helical membrane pass occupies residues 72–92 (LHVGIVSLSTLAANLAATMFA). N-linked (GlcNAc...) asparagine glycosylation is present at Asn103. The next 5 membrane-spanning stretches (helical) occupy residues 111–131 (AMTV…LAPL), 147–167 (VYMA…FLVF), 169–189 (IIAG…VADL), 200–220 (ALFA…GGFV), and 228–248 (WTFR…FALM). Asn252 is a glycosylation site (N-linked (GlcNAc...) asparagine). Helical transmembrane passes span 302 to 322 (PIVL…FLLF), 353 to 373 (LLLM…YGWT), 380 to 400 (WIVP…VVIP), 403 to 423 (IYLV…ANLL), and 446 to 466 (GWGN…PWIF).

It belongs to the major facilitator superfamily.

The protein localises to the cell membrane. Efflux pump required for efficient secretion of trichosetin or other secondary metabolies produced by the trichosetin gene cluster. Plays a crucial role in detoxification of the toxic trichosetin in Gibberella fujikuroi cells. This Gibberella fujikuroi (strain CBS 195.34 / IMI 58289 / NRRL A-6831) (Bakanae and foot rot disease fungus) protein is Trichosetin biosynthesis cluster MFS transporter.